The primary structure comprises 223 residues: Endonuclease V (223 aa).

Asp45 and Asp113 together coordinate Mg(2+).

The protein belongs to the endonuclease V family. The cofactor is Mg(2+).

The protein localises to the cytoplasm. It catalyses the reaction Endonucleolytic cleavage at apurinic or apyrimidinic sites to products with a 5'-phosphate.. In terms of biological role, DNA repair enzyme involved in the repair of deaminated bases. Selectively cleaves double-stranded DNA at the second phosphodiester bond 3' to a deoxyinosine leaving behind the intact lesion on the nicked DNA. The sequence is that of Endonuclease V from Dehalococcoides mccartyi (strain CBDB1).